The sequence spans 253 residues: uncharacterized protein (253 aa).

Positions 1 to 16 are cleaved as a signal peptide; sequence MCVVYRTSVLILLASG. C17 carries the N-palmitoyl cysteine lipid modification. C17 is lipidated: S-diacylglycerol cysteine.

The protein belongs to the staphylococcal tandem lipoprotein family.

Its subcellular location is the cell membrane. This is an uncharacterized protein from Staphylococcus aureus (strain N315).